The sequence spans 427 residues: N-myc proto-oncogene protein (427 aa).

Disordered stretches follow at residues F45–L79, E144–A173, A195–K255, and A297–N349. 2 stretches are compositionally biased toward pro residues: residues P49–G61 and A152–P167. A compositionally biased stretch (low complexity) spans R210–D221. Acidic residues predominate over residues T222–D242. S224 and S226 each carry phosphoserine; by CK2. Positions E343–L396 constitute a bHLH domain. The interval L396–L417 is leucine-zipper.

In terms of assembly, efficient DNA binding requires dimerization with another bHLH protein. Binds DNA as a heterodimer with MAX.

The protein localises to the nucleus. The chain is N-myc proto-oncogene protein (MYCN) from Serinus canaria (Island canary).